The primary structure comprises 675 residues: Parasporal crystal protein Cry18Ba (675 aa).

The protein belongs to the delta endotoxin family.

In terms of biological role, binds to the brush border membrane vesicles of scarab larvae and damages the gut wall somehow to allow the vegetative cells of P.popilliae to enter the hemolymph. The protein is Parasporal crystal protein Cry18Ba (cry18Ba) of Paenibacillus popilliae (Bacillus popilliae).